A 307-amino-acid polypeptide reads, in one-letter code: Probable transposase for transposon Tn903 (307 aa).

Required for transposition of transposon Tn903. This is Probable transposase for transposon Tn903 from Escherichia coli.